The primary structure comprises 68 residues: U2-agatoxin-Ao1u (68 aa).

The signal sequence occupies residues 1 to 20 (MKAIISLLLISAMVFSMIEA). Residues 21–34 (VPLEEGLQLFEGER) constitute a propeptide that is removed on maturation. 3 disulfide bridges follow: cysteine 36/cysteine 52, cysteine 43/cysteine 57, and cysteine 51/cysteine 67.

It belongs to the neurotoxin 01 (U2-agtx) family. In terms of tissue distribution, expressed by the venom gland.

Its subcellular location is the secreted. Insect active toxin causing rapid but reversible paralysis in crickets. No activity shown in mammals. Does not show effect on mammalian voltage-gated calcium channels. The chain is U2-agatoxin-Ao1u from Agelena orientalis (Funnel-web spider).